We begin with the raw amino-acid sequence, 272 residues long: Indole-3-glycerol phosphate synthase (272 aa).

The protein belongs to the TrpC family.

It catalyses the reaction 1-(2-carboxyphenylamino)-1-deoxy-D-ribulose 5-phosphate + H(+) = (1S,2R)-1-C-(indol-3-yl)glycerol 3-phosphate + CO2 + H2O. It participates in amino-acid biosynthesis; L-tryptophan biosynthesis; L-tryptophan from chorismate: step 4/5. This Mycobacterium leprae (strain Br4923) protein is Indole-3-glycerol phosphate synthase.